A 140-amino-acid polypeptide reads, in one-letter code: ATP synthase epsilon chain (140 aa).

The protein belongs to the ATPase epsilon chain family. In terms of assembly, F-type ATPases have 2 components, CF(1) - the catalytic core - and CF(0) - the membrane proton channel. CF(1) has five subunits: alpha(3), beta(3), gamma(1), delta(1), epsilon(1). CF(0) has three main subunits: a, b and c.

The protein resides in the cell membrane. Produces ATP from ADP in the presence of a proton gradient across the membrane. The chain is ATP synthase epsilon chain from Baumannia cicadellinicola subsp. Homalodisca coagulata.